Here is a 213-residue protein sequence, read N- to C-terminus: uncharacterized protein (213 aa).

Over residues 1-11 (MFATKDPEFEN) the composition is skewed to basic and acidic residues. Disordered regions lie at residues 1–21 (MFAT…SPRN) and 63–98 (LRNK…EQAW). The span at 12–21 (RINTNKSPRN) shows a compositional bias: polar residues. The span at 63-93 (LRNKAPKNEETKHEEHTPDNHEETDHHEAKQ) shows a compositional bias: basic and acidic residues.

This is an uncharacterized protein from Escherichia coli (strain K12).